The chain runs to 413 residues: DNA polymerase IV 1 (413 aa).

A UmuC domain is found at 7–188 (IFHVDMNSFY…LPIEEMYGIG (182 aa)). 2 residues coordinate Mg(2+): Asp11 and Asp107. The active site involves Glu108.

It belongs to the DNA polymerase type-Y family. Monomer. Mg(2+) is required as a cofactor.

It is found in the cytoplasm. It carries out the reaction DNA(n) + a 2'-deoxyribonucleoside 5'-triphosphate = DNA(n+1) + diphosphate. Its function is as follows. Poorly processive, error-prone DNA polymerase involved in untargeted mutagenesis. Copies undamaged DNA at stalled replication forks, which arise in vivo from mismatched or misaligned primer ends. These misaligned primers can be extended by PolIV. Exhibits no 3'-5' exonuclease (proofreading) activity. May be involved in translesional synthesis, in conjunction with the beta clamp from PolIII. The chain is DNA polymerase IV 1 (dinB1) from Halalkalibacterium halodurans (strain ATCC BAA-125 / DSM 18197 / FERM 7344 / JCM 9153 / C-125) (Bacillus halodurans).